A 168-amino-acid chain; its full sequence is MVEDILAPGLRVVFCGINPGLSSAGTGFPFAHPANRFWKVIYQAGFTDRQLKPQEAQHLLDYRCGVTKLVDRPTVQANEISNQELHAGGRKLIEKIEDYQPQALAILGKQAYEQGFSQRGAQWGKQTLSIGSTQIWVLPNPSGLSRVSLEKLVEAYRELDQALVVRGR.

Belongs to the uracil-DNA glycosylase (UDG) superfamily. TDG/mug family. Binds DNA as a monomer.

The protein localises to the cytoplasm. The enzyme catalyses Specifically hydrolyzes mismatched double-stranded DNA and polynucleotides, releasing free uracil.. Excises ethenocytosine and uracil, which can arise by alkylation or deamination of cytosine, respectively, from the corresponding mispairs with guanine in ds-DNA. It is capable of hydrolyzing the carbon-nitrogen bond between the sugar-phosphate backbone of the DNA and the mispaired base. The complementary strand guanine functions in substrate recognition. Required for DNA damage lesion repair in stationary-phase cells. The chain is G/U mismatch-specific DNA glycosylase from Shigella dysenteriae serotype 1 (strain Sd197).